Consider the following 501-residue polypeptide: Cytochrome P450 6j1 (501 aa).

Position 444 (Cys444) interacts with heme.

Belongs to the cytochrome P450 family. The cofactor is heme.

Its subcellular location is the endoplasmic reticulum membrane. It is found in the microsome membrane. This Blattella germanica (German cockroach) protein is Cytochrome P450 6j1 (CYP6J1).